The following is a 185-amino-acid chain: Ribosome-recycling factor (185 aa).

Belongs to the RRF family.

It localises to the cytoplasm. Functionally, responsible for the release of ribosomes from messenger RNA at the termination of protein biosynthesis. May increase the efficiency of translation by recycling ribosomes from one round of translation to another. This is Ribosome-recycling factor from Campylobacter jejuni (strain RM1221).